The primary structure comprises 427 residues: Transcobalamin-2 (427 aa).

An N-terminal signal peptide occupies residues 1–18 (MRHLGALLFLLGVLGALA). 3 disulfides stabilise this stretch: Cys21–Cys267, Cys116–Cys309, and Cys165–Cys205. Cob(II)alamin-binding positions include Gln104, 152 to 156 (TSYYQ), His190, 190 to 194 (HHSVD), Asn242, Ser245, Gln291, and 395 to 397 (WQL).

This sequence belongs to the eukaryotic cobalamin transport proteins family. In terms of assembly, interacts with CD320 (via LDL-receptor class A domains).

It localises to the secreted. Functionally, primary vitamin B12-binding and transport protein. Delivers cobalamin to cells. In Pongo abelii (Sumatran orangutan), this protein is Transcobalamin-2 (TCN2).